A 492-amino-acid chain; its full sequence is Probable malate:quinone oxidoreductase 1 (492 aa).

Belongs to the MQO family. Requires FAD as cofactor.

The enzyme catalyses (S)-malate + a quinone = a quinol + oxaloacetate. It functions in the pathway carbohydrate metabolism; tricarboxylic acid cycle; oxaloacetate from (S)-malate (quinone route): step 1/1. The protein is Probable malate:quinone oxidoreductase 1 of Staphylococcus epidermidis (strain ATCC 35984 / DSM 28319 / BCRC 17069 / CCUG 31568 / BM 3577 / RP62A).